Reading from the N-terminus, the 119-residue chain is Large ribosomal subunit protein bL20 (119 aa).

Belongs to the bacterial ribosomal protein bL20 family.

In terms of biological role, binds directly to 23S ribosomal RNA and is necessary for the in vitro assembly process of the 50S ribosomal subunit. It is not involved in the protein synthesizing functions of that subunit. The protein is Large ribosomal subunit protein bL20 of Acidovorax sp. (strain JS42).